Reading from the N-terminus, the 552-residue chain is Histone deacetylase 15 (552 aa).

The RanBP2-type zinc-finger motif lies at 86-115; sequence EFVKWCCVNCTMSNPGDMVHCCICGEHKES. Positions 149 to 462 are histone deacetylase; it reads STAVGFDERM…ATAVIKVLLG (314 aa). H277 functions as the Proton donor/acceptor in the catalytic mechanism. Residues D313, H315, and D404 each contribute to the Zn(2+) site.

This sequence belongs to the histone deacetylase family. HD type 2 subfamily. Interacts with PIF3 in the dark. Interacts with HY5. Interacts with MYB96. Forms homotetramers. The cofactor is Zn(2+). As to expression, expressed in stems, leaves, flowers, siliques and mature seeds.

It localises to the nucleus. It is found in the cytoplasm. It catalyses the reaction N(6)-acetyl-L-lysyl-[histone] + H2O = L-lysyl-[histone] + acetate. Inhibited by trichostatin A (TSA), a well-known histone deacetylase inhibitor. In terms of biological role, responsible for the deacetylation of lysine residues on the N-terminal part of the core histones (H2A, H2B, H3 and H4). Histone deacetylation gives a tag for epigenetic repression and plays an important role in transcriptional regulation, cell cycle progression and developmental events. Histone deacetylases act via the formation of large multiprotein complexes. Represses chlorophyll biosynthesis and photosynthesis in the dark. Is recruited by PIF3 to the promoters of chlorophyll biosynthetic and photosynthetic genes, and represses their transcription by histone deacetylation. Involved in the repression of hypocotyl cell elongation to promote photomorphogenesis. Is recruited by HY5 to the promoters of a subset of cell wall organization and auxin signaling-related genes, and represses gene expression by decreasing the levels of histone H4 acetylation in a light-dependent manner. Promotes abscisic acid (ABA) signaling. Is recruited by MYB96 to the promoters of a subset of Rho GTPase (ROP) genes, which repress ABA signaling at the early stages of signal transduction. Represses ROP expression by removing acetyl groups of histone H3 and H4 from the cognate regions, particularly in the presence of ABA. Represses the plant response to elevated ambient temperature by directly repressing warm temperature-responsive genes. The chain is Histone deacetylase 15 from Arabidopsis thaliana (Mouse-ear cress).